The following is a 529-amino-acid chain: MKKIMLVFITLILVSLPIAQQTEAKDASAFNKENLISSIAPPASPPASPKTPIEKKHADEIDKYIQGLDYNKNNVLVYHGDAVTNVPPRKGYKDGNEYIVVEKKKKSINQNNADIQVVNAISSLTYPGALVKANSELVENQPDVLPVKRDSLTLSIDLPGMTNQDNKIVVKNATKSNVNNAVNTLVERWNEKYAQAYPNVSAKIDYDDEMAYSESQLIAKFGTAFKAVNNSLNVNFGAISEGKMQEEVISFKQIYYNVNVNEPTRPSRFFGKAVTKEQLQALGVNAENPPAYISSVAYGRQVYLKLSTNSHSTKVKAAFDAAVSGKSVSGDVELTNIIKNSSFKAVIYGGSAKDEVQIIDGNLGDLRDILKKGATFNRETPGVPIAYTTNFLKDNELAVIKNNSEYIETTSKAYTDGKINIDHSGGYVAQFNISWDEINYDPEGNEIVQHKNWSENNKSKLAHFTSSIYLPGNARNINVYAKECTGLAWEWWRTVIDDRNLPLVKNRNISIWGTTLYPKYSNSVDNPIE.

The N-terminal stretch at 1 to 24 is a signal peptide; it reads MKKIMLVFITLILVSLPIAQQTEA. 4 consecutive transmembrane segments (beta stranded) span residues 214-227, 234-243, 312-321, and 329-341; these read ESQL…AFKA, VNFGAISEGK, STKVKAAFDA, and SGDV…IKNS. The Conserved undecapeptide motif lies at 483–493; sequence ECTGLAWEWWR. The Cholesterol binding signature appears at 515–516; that stretch reads TL.

It belongs to the cholesterol-dependent cytolysin family. In terms of assembly, homooligomeric pore complex of 35 to 50 subunits; when inserted in the host membrane.

It is found in the secreted. Its subcellular location is the host membrane. It localises to the host cell membrane. With respect to regulation, activity of listeriolysin O is regulated on multiple levels. It should be high in the phagosome, thereby allowing escape of the bacteria from the phagosomal compartment. Then, once inside the host cytosol, the activity must be controlled to prevent lysis of the host plasma membrane and loss of the intracellular environment. Functionally, a cholesterol-dependent toxin that causes cytolysis by forming pores in cholesterol containing host membranes. After binding to target membranes, the protein undergoes a major conformation change, leading to its insertion in the host membrane and formation of an oligomeric pore complex. Cholesterol is required for binding to host membranes, membrane insertion and pore formation; cholesterol binding is mediated by a Thr-Leu pair in the C-terminus. Acts as a major virulence factor required for the escape of bacteria from phagosomal vacuoles and entry into the host cytosol. Can be reversibly inactivated by oxidation. This is Listeriolysin O (hly) from Listeria monocytogenes serotype 4b (strain F2365).